The following is a 318-amino-acid chain: Homeobox protein Nkx-2.5 (318 aa).

Positions 137–196 (RRKPRVLFSQAQVYELERRFKQQRYLSAPERDQLASVLKLTSTQVKIWFQNRRYKCKRQR) form a DNA-binding region, homeobox.

It belongs to the NK-2 homeobox family. In terms of assembly, homodimer (via the homeobox); binds DNA as homodimer. Interacts (via the homeobox) with TBX5 (via the T-box); this complex binds DNA. Interacts with HIPK1 and HIPK2, but not HIPK3. Interacts with the C-terminal zinc finger of GATA4 through its homeobox domain. Also interacts with JARID2 which represses its ability to activate transcription of ANF. Interacts with FBLIM1. Interacts with TBX18. Interacts with histone methyltransferase NSD2 (via HMG box). Interacts with NEDD9. Interacts with TBX1. As to expression, predominantly in the adult and embryonic heart, and to a lesser extent in lingual muscle, spleen and stomach.

It localises to the nucleus. Functionally, transcription factor required for the development of the heart and the spleen. During heart development, acts as a transcriptional activator of NPPA/ANF in cooperation with GATA4. May cooperate with TBX2 to negatively modulate expression of NPPA/ANF in the atrioventricular canal. Binds to the core DNA motif of NPPA promoter. Together with PBX1, required for spleen development through a mechanism that involves CDKN2B repression. Positively regulates transcription of genes such as COL3A1 and MMP2, resulting in increased pulmonary endothelial fibrosis in response to hypoxia. This chain is Homeobox protein Nkx-2.5 (Nkx2-5), found in Mus musculus (Mouse).